Reading from the N-terminus, the 239-residue chain is Ribonuclease PH (239 aa).

Phosphate contacts are provided by residues Arg-86 and Gly-124 to Arg-126.

Belongs to the RNase PH family. Homohexameric ring arranged as a trimer of dimers.

The enzyme catalyses tRNA(n+1) + phosphate = tRNA(n) + a ribonucleoside 5'-diphosphate. Phosphorolytic 3'-5' exoribonuclease that plays an important role in tRNA 3'-end maturation. Removes nucleotide residues following the 3'-CCA terminus of tRNAs; can also add nucleotides to the ends of RNA molecules by using nucleoside diphosphates as substrates, but this may not be physiologically important. Probably plays a role in initiation of 16S rRNA degradation (leading to ribosome degradation) during starvation. This is Ribonuclease PH from Rickettsia akari (strain Hartford).